Reading from the N-terminus, the 630-residue chain is GATA-type transcription factor SRE1 (630 aa).

Disordered stretches follow at residues 1 to 139 and 162 to 203; these read MTGL…TPLW and DRPT…RLTD. Composition is skewed to polar residues over residues 66 to 82, 115 to 133, and 175 to 196; these read DNTQ…QLQN, KAQS…NCGT, and YGSS…TNDG. Residues 128–152 form a GATA-type 1 zinc finger; that stretch reads CSNCGTKRTPLWRRSPTGATICNAC. Residues 219 to 237 form a cystein-rich region (CRR) region; the sequence is CPGGGSCNGTGGAEGCDGC. The segment at 256 to 283 is disordered; it reads HTPRTSPQVSTQGGPGSTEGDAGSSNPE. Over residues 258-267 the composition is skewed to polar residues; the sequence is PRTSPQVSTQ. The GATA-type 2 zinc finger occupies 291–315; sequence CQNCQTTVTPLWRRDENGHPICNAC. A disordered region spans residues 339 to 609; that stretch reads KRVVPAMREQ…AKAERRARLQ (271 aa). Residues 349-363 show a composition bias toward polar residues; that stretch reads SPPSATQSSNGSVSP. Low complexity-rich tracts occupy residues 436–447 and 492–503; these read NNHNNGETTNTH and SSSSASFPNNNP. Positions 504-513 are enriched in polar residues; sequence GRFNSISSLL. The segment covering 558–568 has biased composition (low complexity); it reads SHSPPRFSPSL. The span at 595–609 shows a compositional bias: basic and acidic residues; the sequence is VDHRDAKAERRARLQ. Positions 595-630 form a coiled coil; that stretch reads VDHRDAKAERRARLQREAQDMREALKAKERELALLE.

Its subcellular location is the nucleus. Its function is as follows. GATA-type transcription repressor that regulates iron- acquisition genes through specific binding the GATA sequence element 5'-(G/A)ATC(T/A)GATAA-3' of target promoters in an iron- and zinc-dependent manner. Regulation occurs via direct binding of iron ions. Iron acquisition regulation is critical for survival under both iron-limiting conditions (to acquire essential iron) and iron-replete conditions (to limit iron toxicity). SRE1 targets include genes encoding a number of key iron-regulated factors such as those involved in siderophore biosynthesis, presumed ferric reductase activity, iron-responsive transcriptional regulation, oxidative stress response, as well as genes encoding a number of putative oxidoreductases, metabolic and mitochondrial enzymes, superoxide dismutase, and genes previously identified as induced during nitrosative stress. This Ajellomyces capsulatus (Darling's disease fungus) protein is GATA-type transcription factor SRE1.